A 149-amino-acid polypeptide reads, in one-letter code: Ribonuclease VapC2 (149 aa).

In terms of domain architecture, PINc spans 11-149; that stretch reads IFFDSNILIY…RVDFLEIIEI (139 aa). Residues Asp14 and Asp116 each coordinate Mg(2+).

Belongs to the PINc/VapC protein family. Mg(2+) serves as cofactor.

Its function is as follows. Toxic component of a type II toxin-antitoxin (TA) system. An RNase. Its cognate antitoxin is VapB2. This Methanocaldococcus jannaschii (strain ATCC 43067 / DSM 2661 / JAL-1 / JCM 10045 / NBRC 100440) (Methanococcus jannaschii) protein is Ribonuclease VapC2.